The chain runs to 443 residues: Cell division protein FtsA (443 aa).

It belongs to the FtsA/MreB family. As to quaternary structure, self-interacts. Interacts with FtsZ.

Its subcellular location is the cell inner membrane. Cell division protein that is involved in the assembly of the Z ring. May serve as a membrane anchor for the Z ring. This chain is Cell division protein FtsA, found in Agrobacterium fabrum (strain C58 / ATCC 33970) (Agrobacterium tumefaciens (strain C58)).